The sequence spans 200 residues: Superoxide dismutase [Fe] (200 aa).

Positions 28, 82, 165, and 169 each coordinate Fe cation.

Belongs to the iron/manganese superoxide dismutase family. As to quaternary structure, homodimer. It depends on Fe cation as a cofactor.

The catalysed reaction is 2 superoxide + 2 H(+) = H2O2 + O2. Its function is as follows. Destroys superoxide anion radicals which are normally produced within the cells and which are toxic to biological systems. This chain is Superoxide dismutase [Fe] (sodB), found in Rhodobacter capsulatus (Rhodopseudomonas capsulata).